A 164-amino-acid chain; its full sequence is Low molecular weight protein-tyrosine-phosphatase (164 aa).

C9 functions as the Nucleophile in the catalytic mechanism. R15 is a catalytic residue. The active-site Proton donor is D128.

It belongs to the low molecular weight phosphotyrosine protein phosphatase family.

It carries out the reaction O-phospho-L-tyrosyl-[protein] + H2O = L-tyrosyl-[protein] + phosphate. Acts on tyrosine phosphorylated proteins, low-MW aryl phosphates and natural and synthetic acyl phosphates. May be involved in the regulation of sulfur amino acid metabolism. The protein is Low molecular weight protein-tyrosine-phosphatase (ptpA) of Streptomyces coelicolor (strain ATCC BAA-471 / A3(2) / M145).